Reading from the N-terminus, the 400-residue chain is Phosphoglycerate kinase (400 aa).

Residues 24 to 26 (DFN), arginine 40, 63 to 66 (HFGR), arginine 121, and arginine 154 each bind substrate. ATP-binding positions include lysine 205, glycine 296, glutamate 327, and 356 to 359 (GGDS).

As to quaternary structure, monomer.

The protein localises to the cytoplasm. The enzyme catalyses (2R)-3-phosphoglycerate + ATP = (2R)-3-phospho-glyceroyl phosphate + ADP. It participates in carbohydrate degradation; glycolysis; pyruvate from D-glyceraldehyde 3-phosphate: step 2/5. The chain is Phosphoglycerate kinase from Nostoc sp. (strain PCC 7120 / SAG 25.82 / UTEX 2576).